Consider the following 186-residue polypeptide: Glutathione peroxidase 7 (186 aa).

Positions 1–18 are cleaved as a signal peptide; that stretch reads MVAARAAAWLLLAAAACA. Cysteine 56 is a catalytic residue.

It belongs to the glutathione peroxidase family.

The protein localises to the secreted. It carries out the reaction 2 glutathione + H2O2 = glutathione disulfide + 2 H2O. The sequence is that of Glutathione peroxidase 7 (GPX7) from Bos taurus (Bovine).